The following is a 358-amino-acid chain: Aminomethyltransferase (358 aa).

Belongs to the GcvT family. The glycine cleavage system is composed of four proteins: P, T, L and H.

It carries out the reaction N(6)-[(R)-S(8)-aminomethyldihydrolipoyl]-L-lysyl-[protein] + (6S)-5,6,7,8-tetrahydrofolate = N(6)-[(R)-dihydrolipoyl]-L-lysyl-[protein] + (6R)-5,10-methylene-5,6,7,8-tetrahydrofolate + NH4(+). In terms of biological role, the glycine cleavage system catalyzes the degradation of glycine. In Francisella tularensis subsp. mediasiatica (strain FSC147), this protein is Aminomethyltransferase.